A 372-amino-acid polypeptide reads, in one-letter code: Putative actin-27 (372 aa).

This sequence belongs to the actin family.

The protein resides in the cytoplasm. The protein localises to the cytoskeleton. It catalyses the reaction ATP + H2O = ADP + phosphate + H(+). Functionally, actins are highly conserved proteins that are involved in various types of cell motility and are ubiquitously expressed in all eukaryotic cells. Multiple isoforms are involved in various cellular functions such as cytoskeleton structure, cell mobility, chromosome movement and muscle contraction. This chain is Putative actin-27 (act27), found in Dictyostelium discoideum (Social amoeba).